The primary structure comprises 418 residues: Putative heat shock protein HSP 90-alpha A4 (418 aa).

The ATP site is built by aspartate 33, lysine 52, phenylalanine 78, and arginine 204. Disordered regions lie at residues 255–289 and 383–418; these read EDLE…TSAK and GLGT…RMEK. The span at 265–274 shows a compositional bias: basic and acidic residues; that stretch reads EKKKQEEGKQ.

The protein belongs to the heat shock protein 90 family. In terms of assembly, homodimer.

The protein localises to the cytoplasm. Putative molecular chaperone that may promote the maturation, structural maintenance and proper regulation of specific target proteins. This chain is Putative heat shock protein HSP 90-alpha A4 (HSP90AA4P), found in Homo sapiens (Human).